We begin with the raw amino-acid sequence, 365 residues long: Homeobox protein knotted-1-like 7 (365 aa).

Basic and acidic residues predominate over residues 1-11; sequence MEELEGHRGEG. Residues 1 to 20 are disordered; the sequence is MEELEGHRGEGRLPPPPPLL. The region spanning 227-247 is the ELK domain; sequence ALKRHLLRKYSGYLGGLRKEL. Positions 248–311 form a DNA-binding region, homeobox; TALE-type; that stretch reads SKKRKKGKLP…NQRKRHWKPT (64 aa).

This sequence belongs to the TALE/KNOX homeobox family.

Its subcellular location is the nucleus. Probable transcription factor that may be involved in shoot formation during embryogenesis. The sequence is that of Homeobox protein knotted-1-like 7 (OSH3) from Oryza sativa subsp. japonica (Rice).